The primary structure comprises 204 residues: Recombination protein RecR (204 aa).

The segment at 58–75 (CSVCQNVTDREEDPCSIC) adopts a C4-type zinc-finger fold. Residues 83-181 (TVICVVESPV…EVTKIARGIP (99 aa)) form the Toprim domain.

It belongs to the RecR family.

In terms of biological role, may play a role in DNA repair. It seems to be involved in an RecBC-independent recombinational process of DNA repair. It may act with RecF and RecO. This Chlorobium luteolum (strain DSM 273 / BCRC 81028 / 2530) (Pelodictyon luteolum) protein is Recombination protein RecR.